The following is a 215-amino-acid chain: Protein-L-isoaspartate O-methyltransferase (215 aa).

The active site involves serine 62.

This sequence belongs to the methyltransferase superfamily. L-isoaspartyl/D-aspartyl protein methyltransferase family.

It localises to the cytoplasm. The catalysed reaction is [protein]-L-isoaspartate + S-adenosyl-L-methionine = [protein]-L-isoaspartate alpha-methyl ester + S-adenosyl-L-homocysteine. Its function is as follows. Catalyzes the methyl esterification of L-isoaspartyl residues in peptides and proteins that result from spontaneous decomposition of normal L-aspartyl and L-asparaginyl residues. It plays a role in the repair and/or degradation of damaged proteins. In Bradyrhizobium sp. (strain ORS 278), this protein is Protein-L-isoaspartate O-methyltransferase.